The chain runs to 288 residues: Ribosome biogenesis GTPase A (288 aa).

The CP-type G domain occupies 14 to 179; that stretch reads RRQVTEKLKL…LLDTPGILWP (166 aa). GTP is bound by residues 58 to 61, 131 to 136, and Gly-175; these read NKVD and NVGKST.

This sequence belongs to the TRAFAC class YlqF/YawG GTPase family. MTG1 subfamily. In terms of assembly, interacts with ctc. Interacts with the immature 50S ribosome subunit. 2 molecules of rbgA bind to one 50S subunit.

Its subcellular location is the cytoplasm. Essential protein that is required for a late step of 50S ribosomal subunit assembly. Has GTPase activity that is stimulated by interaction with the immature 50S ribosome subunit. Binds to the 23S rRNA. Required for the association of ribosomal proteins rplP and rpmA with the large subunit. This chain is Ribosome biogenesis GTPase A, found in Priestia megaterium (strain DSM 319 / IMG 1521) (Bacillus megaterium).